The primary structure comprises 171 residues: Lipoprotein signal peptidase (171 aa).

2 helical membrane passes run 67–87 (YALLGLTLAATIFMILWLWRS) and 88–108 (TSKLIACALGLIIGGALGNAY). Catalysis depends on residues D118 and D136. The helical transmembrane segment at 127-147 (FSWYVFNLADAAIVAGVALLL) threads the bilayer.

It belongs to the peptidase A8 family.

The protein localises to the cell inner membrane. The catalysed reaction is Release of signal peptides from bacterial membrane prolipoproteins. Hydrolyzes -Xaa-Yaa-Zaa-|-(S,diacylglyceryl)Cys-, in which Xaa is hydrophobic (preferably Leu), and Yaa (Ala or Ser) and Zaa (Gly or Ala) have small, neutral side chains.. Its pathway is protein modification; lipoprotein biosynthesis (signal peptide cleavage). Its function is as follows. This protein specifically catalyzes the removal of signal peptides from prolipoproteins. The chain is Lipoprotein signal peptidase from Methylocella silvestris (strain DSM 15510 / CIP 108128 / LMG 27833 / NCIMB 13906 / BL2).